Consider the following 39-residue polypeptide: Contryphan-Cal3 (39 aa).

The N-terminal stretch at 1-20 (MTRTAVLLLTLLFLVAMAAS) is a signal peptide. A disulfide bridge links Cys29 with Cys35.

In terms of tissue distribution, expressed by the venom duct.

The protein localises to the secreted. In terms of biological role, probable neurotoxin. In Californiconus californicus (California cone), this protein is Contryphan-Cal3.